The primary structure comprises 388 residues: MNLHEYQGKQLFAEYGLPVSKGFAVDTPEQAAEACDKIGGNEWVVKAQVHAGGRGKAGGVKLVRSKEDAKAFAAQWLGKNLVTYQTDANGQPVSKILVESCTDIAKELYLGAVVDRSSRRIVFMASTEGGVDIEKVAHETPEKILKATIDPLVGAQPFQGRELAFQLGLEGKQVQQFAKIFVGLAKLFKDHDLALLEVNPLVIKADGDLHCLDAKINIDANAMYRQPKLKTFHDPSQDDAREAHAAKFELNYVALEGNIGCMVNGAGLAMGTMDIVNLHGGKPANFLDVGGGATKERVTEAFKIILSDSNVAAVLVNIFGGIVRCDMIAEGIIGAVKEVGVKVPVVVRLEGNNAELGAKVLAESGLNIIAATSLTDAAQQVVKAAEGK.

The ATP-grasp domain occupies 9–244; it reads KQLFAEYGLP…PSQDDAREAH (236 aa). ATP-binding positions include lysine 46, 53–55, glutamate 99, threonine 102, and glutamate 107; that span reads GRG. Positions 199 and 213 each coordinate Mg(2+). Substrate-binding positions include asparagine 264 and 321-323; that span reads GIV.

This sequence belongs to the succinate/malate CoA ligase beta subunit family. As to quaternary structure, heterotetramer of two alpha and two beta subunits. Mg(2+) serves as cofactor.

The enzyme catalyses succinate + ATP + CoA = succinyl-CoA + ADP + phosphate. It catalyses the reaction GTP + succinate + CoA = succinyl-CoA + GDP + phosphate. The protein operates within carbohydrate metabolism; tricarboxylic acid cycle; succinate from succinyl-CoA (ligase route): step 1/1. Functionally, succinyl-CoA synthetase functions in the citric acid cycle (TCA), coupling the hydrolysis of succinyl-CoA to the synthesis of either ATP or GTP and thus represents the only step of substrate-level phosphorylation in the TCA. The beta subunit provides nucleotide specificity of the enzyme and binds the substrate succinate, while the binding sites for coenzyme A and phosphate are found in the alpha subunit. The polypeptide is Succinate--CoA ligase [ADP-forming] subunit beta (Pseudomonas putida (strain ATCC 700007 / DSM 6899 / JCM 31910 / BCRC 17059 / LMG 24140 / F1)).